We begin with the raw amino-acid sequence, 379 residues long: Cytochrome b (379 aa).

4 consecutive transmembrane segments (helical) span residues 33–53, 77–98, 113–133, and 178–198; these read FGSL…FLAM, WTIR…FIHV, WNVG…GYVL, and FFAL…IHLL. Heme b-binding residues include histidine 83 and histidine 97. Heme b is bound by residues histidine 182 and histidine 196. Histidine 201 provides a ligand contact to a ubiquinone. The next 4 membrane-spanning stretches (helical) occupy residues 226 to 246, 288 to 308, 320 to 340, and 347 to 367; these read TKDF…TLFY, LGGV…PLLQ, LSQF…WIGG, and FITI…LIMP.

This sequence belongs to the cytochrome b family. In terms of assembly, the cytochrome bc1 complex contains 11 subunits: 3 respiratory subunits (MT-CYB, CYC1 and UQCRFS1), 2 core proteins (UQCRC1 and UQCRC2) and 6 low-molecular weight proteins (UQCRH/QCR6, UQCRB/QCR7, UQCRQ/QCR8, UQCR10/QCR9, UQCR11/QCR10 and a cleavage product of UQCRFS1). This cytochrome bc1 complex then forms a dimer. It depends on heme b as a cofactor.

Its subcellular location is the mitochondrion inner membrane. In terms of biological role, component of the ubiquinol-cytochrome c reductase complex (complex III or cytochrome b-c1 complex) that is part of the mitochondrial respiratory chain. The b-c1 complex mediates electron transfer from ubiquinol to cytochrome c. Contributes to the generation of a proton gradient across the mitochondrial membrane that is then used for ATP synthesis. The sequence is that of Cytochrome b (MT-CYB) from Lepilemur edwardsi (Milne-Edwards's sportive lemur).